We begin with the raw amino-acid sequence, 861 residues long: DNA mismatch repair protein MutS (861 aa).

614–621 contributes to the ATP binding site; that stretch reads GPNMGGKS.

It belongs to the DNA mismatch repair MutS family.

Its function is as follows. This protein is involved in the repair of mismatches in DNA. It is possible that it carries out the mismatch recognition step. This protein has a weak ATPase activity. This chain is DNA mismatch repair protein MutS, found in Mannheimia succiniciproducens (strain KCTC 0769BP / MBEL55E).